Here is a 106-residue protein sequence, read N- to C-terminus: Toxin-like structure LSTX-D6 (106 aa).

A signal peptide spans 1–20 (MMKVLVVAALLVTLISYSSS). The propeptide occupies 21 to 41 (EGIDDLEADELLSLMANEQTR). Cystine bridges form between Cys45–Cys60, Cys52–Cys69, Cys59–Cys85, and Cys71–Cys83.

The protein belongs to the neurotoxin 19 (CSTX) family. 02 (D7) subfamily. Expressed by the venom gland.

The protein resides in the secreted. This Lycosa singoriensis (Wolf spider) protein is Toxin-like structure LSTX-D6.